A 239-amino-acid polypeptide reads, in one-letter code: U2 small nuclear ribonucleoprotein A' (239 aa).

LRR repeat units follow at residues 19–40 (KETELDLRWYQIPIIENLGVLR), 42–63 (VHDAIDFTDNDIRYLGNFPRMK), 64–85 (RLQTLLCGNNRITAIAPDIGKV), and 88–109 (NLKTLSLAQNHLQEIADLDPLA). The region spanning 122–160 (NPVAQKQYYRLYLIWRIPSLHILDFERVRRNERLRAEEV) is the LRRCT domain.

It belongs to the U2 small nuclear ribonucleoprotein A family. In terms of assembly, belongs to the 40S cdc5-associated complex (or cwf complex), a spliceosome sub-complex reminiscent of a late-stage spliceosome composed of the U2, U5 and U6 snRNAs and at least brr2, cdc5, cwf2/prp3, cwf3/syf1, cwf4/syf3, cwf5/ecm2, spp42/cwf6, cwf7/spf27, cwf8, cwf9, cwf10, cwf11, cwf12, prp45/cwf13, cwf14, cwf15, cwf16, cwf17, cwf18, cwf19, cwf20, cwf21, cwf22, cwf23, cwf24, cwf25, cwf26, cyp7/cwf27, cwf28, cwf29/ist3, lea1, msl1, prp5/cwf1, prp10, prp12/sap130, prp17, prp22, sap61, sap62, sap114, sap145, slu7, smb1, smd1, smd3, smf1, smg1 and syf2.

The protein localises to the nucleus. Involved in pre-mRNA splicing. This protein is associated with sn-RNP U2. It helps the A' protein to bind stem loop IV of U2 snRNA. The chain is U2 small nuclear ribonucleoprotein A' (lea1) from Schizosaccharomyces pombe (strain 972 / ATCC 24843) (Fission yeast).